Here is a 448-residue protein sequence, read N- to C-terminus: Solute carrier family 52, riboflavin transporter, member 2 (448 aa).

Helical transmembrane passes span 14–34 (LLVA…WVEL), 47–67 (LPSY…VVTL), 79–99 (VPIQ…APLW), 105–125 (VAGQ…ALAC), and 147–167 (FFLG…VQGV). A glycan (N-linked (GlcNAc...) asparagine) is linked at Asn-178. The helical transmembrane segment at 198–218 (WALTALLVTSAAAFQGLLLLL) threads the bilayer. The interval 228–267 (GAGPELPLGSPGAEEEEKEEEEALPLQEPPSQAAGTIPGP) is disordered. Residues 240–250 (AEEEEKEEEEA) show a composition bias toward acidic residues. Helical transmembrane passes span 280 to 300 (AFLL…LPAV), 315 to 335 (LAVV…MGVL), 342 to 362 (LVGL…LAIL), 369 to 389 (VGTT…LCVF), and 407 to 427 (ALLA…GTMF).

It belongs to the riboflavin transporter family.

Its subcellular location is the cell membrane. The catalysed reaction is riboflavin(in) = riboflavin(out). With respect to regulation, riboflavin transport is Na(+)-independent but moderately pH-sensitive. Activity is strongly inhibited by riboflavin analogs, such as lumiflavin. Weakly inhibited by flavin adenine dinucleotide (FAD) and flavin mononucleotide (FMN). In terms of biological role, plasma membrane transporter mediating the uptake by cells of the water soluble vitamin B2/riboflavin that plays a key role in biochemical oxidation-reduction reactions of the carbohydrate, lipid, and amino acid metabolism. May also act as a receptor for 4-hydroxybutyrate. Functionally, (Microbial infection) In case of infection by retroviruses, acts as a cell receptor to retroviral envelopes similar to the porcine endogenous retrovirus (PERV-A). This is Solute carrier family 52, riboflavin transporter, member 2 (SLC52A2) from Papio hamadryas (Hamadryas baboon).